The chain runs to 377 residues: MLGKVERSEMYILFAMTQVLLVDKISGITSHTAVAKIRHLTGIKKIGHCGTLDPAACGLLIMGCGTATRLIRYMSNLDKRYIATITLGTQTTTDDSEGEIIYSAPKPSLDKITLESIGRAAEKLSGTIKQIPSAYSAIKVSGNRAYNLARQGIIPKLNAREVRVHWKFLGDFENNQVHVQITCSSGTYVRALARDMGKFLGVGGHLSYLKRLSIGPFHLHEIYREINKKEATMSERTPSGNTQGLTDNMAISESDKHDCTEPGINCTELGIKDTCTALREVHYTQGDTLSFTRLTALQALSRIYKPIEVSQKQADDLSCGRYISLGIDSKGPVCAVCKENLIAVIQPVSAGLWRPETVLSDNRKLNSNAAQDASGST.

Asp-53 (nucleophile) is an active-site residue.

The protein belongs to the pseudouridine synthase TruB family. Type 1 subfamily.

It carries out the reaction uridine(55) in tRNA = pseudouridine(55) in tRNA. Its function is as follows. Responsible for synthesis of pseudouridine from uracil-55 in the psi GC loop of transfer RNAs. This chain is tRNA pseudouridine synthase B, found in Tropheryma whipplei (strain Twist) (Whipple's bacillus).